Reading from the N-terminus, the 242-residue chain is Type III pantothenate kinase (242 aa).

5 to 12 contacts ATP; the sequence is DLGNTRLK. Substrate-binding positions include Y94 and 100 to 103; that span reads GCDR. D102 serves as the catalytic Proton acceptor. T124 lines the ATP pocket. T175 serves as a coordination point for substrate.

This sequence belongs to the type III pantothenate kinase family. In terms of assembly, homodimer. The cofactor is NH4(+). It depends on K(+) as a cofactor.

Its subcellular location is the cytoplasm. It catalyses the reaction (R)-pantothenate + ATP = (R)-4'-phosphopantothenate + ADP + H(+). It functions in the pathway cofactor biosynthesis; coenzyme A biosynthesis; CoA from (R)-pantothenate: step 1/5. In terms of biological role, catalyzes the phosphorylation of pantothenate (Pan), the first step in CoA biosynthesis. In Psychrobacter cryohalolentis (strain ATCC BAA-1226 / DSM 17306 / VKM B-2378 / K5), this protein is Type III pantothenate kinase.